The chain runs to 116 residues: Putative pterin-4-alpha-carbinolamine dehydratase (116 aa).

It belongs to the pterin-4-alpha-carbinolamine dehydratase family.

The catalysed reaction is (4aS,6R)-4a-hydroxy-L-erythro-5,6,7,8-tetrahydrobiopterin = (6R)-L-erythro-6,7-dihydrobiopterin + H2O. This Stenotrophomonas maltophilia (strain K279a) protein is Putative pterin-4-alpha-carbinolamine dehydratase.